Here is a 236-residue protein sequence, read N- to C-terminus: Phosphoribosylaminoimidazole-succinocarboxamide synthase (236 aa).

The protein belongs to the SAICAR synthetase family.

It carries out the reaction 5-amino-1-(5-phospho-D-ribosyl)imidazole-4-carboxylate + L-aspartate + ATP = (2S)-2-[5-amino-1-(5-phospho-beta-D-ribosyl)imidazole-4-carboxamido]succinate + ADP + phosphate + 2 H(+). It participates in purine metabolism; IMP biosynthesis via de novo pathway; 5-amino-1-(5-phospho-D-ribosyl)imidazole-4-carboxamide from 5-amino-1-(5-phospho-D-ribosyl)imidazole-4-carboxylate: step 1/2. The protein is Phosphoribosylaminoimidazole-succinocarboxamide synthase of Pseudomonas putida (strain ATCC 700007 / DSM 6899 / JCM 31910 / BCRC 17059 / LMG 24140 / F1).